The following is a 101-amino-acid chain: Small ribosomal subunit protein bS6 (101 aa).

This sequence belongs to the bacterial ribosomal protein bS6 family.

In terms of biological role, binds together with bS18 to 16S ribosomal RNA. The protein is Small ribosomal subunit protein bS6 of Nitratidesulfovibrio vulgaris (strain DSM 19637 / Miyazaki F) (Desulfovibrio vulgaris).